The primary structure comprises 162 residues: MDEGYYSGNLESVLGYVSDMHTKLASITQLVIAKIETIDNDILNNDIVNFIMCRSNLNNPFISFLDTVYTIIDQEIYQNELINSLDDNKIIDCIVNKFMSFYKDNLENIVDAIITLKYIMNNPDFKTTYAEVLGSRIADIDIKQVIRENILQLSNDIRERYL.

It belongs to the poxviridae A49 protein family.

This Variola virus (isolate Human/India/Ind3/1967) (VARV) protein is Protein A49.